Consider the following 271-residue polypeptide: Acetyl-coenzyme A carboxylase carboxyl transferase subunit alpha (271 aa).

The CoA carboxyltransferase C-terminal domain maps to 1–247 (MSRELIRTAD…KKTILEALGE (247 aa)).

Belongs to the AccA family. In terms of assembly, acetyl-CoA carboxylase is a heterohexamer composed of biotin carboxyl carrier protein (AccB), biotin carboxylase (AccC) and two subunits each of ACCase subunit alpha (AccA) and ACCase subunit beta (AccD).

It is found in the cytoplasm. It carries out the reaction N(6)-carboxybiotinyl-L-lysyl-[protein] + acetyl-CoA = N(6)-biotinyl-L-lysyl-[protein] + malonyl-CoA. It participates in lipid metabolism; malonyl-CoA biosynthesis; malonyl-CoA from acetyl-CoA: step 1/1. Its function is as follows. Component of the acetyl coenzyme A carboxylase (ACC) complex. First, biotin carboxylase catalyzes the carboxylation of biotin on its carrier protein (BCCP) and then the CO(2) group is transferred by the carboxyltransferase to acetyl-CoA to form malonyl-CoA. This is Acetyl-coenzyme A carboxylase carboxyl transferase subunit alpha from Clostridium perfringens (strain ATCC 13124 / DSM 756 / JCM 1290 / NCIMB 6125 / NCTC 8237 / Type A).